A 381-amino-acid polypeptide reads, in one-letter code: uncharacterized protein (381 aa).

A helical membrane pass occupies residues Gly-3 to Ala-23.

This sequence belongs to the band 7/mec-2 family.

The protein resides in the membrane. This is an uncharacterized protein from Mycobacterium bovis (strain ATCC BAA-935 / AF2122/97).